A 166-amino-acid chain; its full sequence is Ribonuclease H (166 aa).

In terms of domain architecture, RNase H type-1 spans 5 to 147; it reads PRKRVALFTD…VDREARRQAQ (143 aa). Residues aspartate 14, glutamate 52, aspartate 74, and aspartate 139 each contribute to the Mg(2+) site. Residues 128–166 form a disordered region; the sequence is GHTGHPENERVDREARRQAQSQAKTPCPPRAPTLFHEEA. Residues 131 to 144 show a composition bias toward basic and acidic residues; it reads GHPENERVDREARR.

The protein belongs to the RNase H family. Monomer. Mg(2+) serves as cofactor.

The enzyme catalyses Endonucleolytic cleavage to 5'-phosphomonoester.. In terms of biological role, endonuclease that specifically degrades the RNA of RNA-DNA hybrids. The protein is Ribonuclease H (rnhA) of Thermus thermophilus (strain ATCC 27634 / DSM 579 / HB8).